A 242-amino-acid chain; its full sequence is 3-oxoacyl-[acyl-carrier-protein] reductase FabG (242 aa).

NADP(+)-binding positions include 10–13, Thr-35, 57–58, and Asn-84; these read GSTR and NV. Position 136 (Ser-136) interacts with substrate. Tyr-149 functions as the Proton acceptor in the catalytic mechanism. Residues 149 to 153 and Ile-182 each bind NADP(+); that span reads YCAAK.

This sequence belongs to the short-chain dehydrogenases/reductases (SDR) family. In terms of assembly, homotetramer.

The enzyme catalyses a (3R)-hydroxyacyl-[ACP] + NADP(+) = a 3-oxoacyl-[ACP] + NADPH + H(+). Its pathway is lipid metabolism; fatty acid biosynthesis. Its function is as follows. Catalyzes the NADPH-dependent reduction of beta-ketoacyl-ACP substrates to beta-hydroxyacyl-ACP products, the first reductive step in the elongation cycle of fatty acid biosynthesis. The chain is 3-oxoacyl-[acyl-carrier-protein] reductase FabG (fabG) from Haemophilus influenzae (strain ATCC 51907 / DSM 11121 / KW20 / Rd).